An 871-amino-acid chain; its full sequence is Chaperone protein ClpB 1 (871 aa).

Positions 6-147 (PNQFTEKAWA…REAIQQIRGS (142 aa)) constitute a Clp R domain. Repeat regions lie at residues 9 to 73 (FTEK…ISRQ) and 84 to 147 (LGQS…IRGS). The interval 160 to 341 (AALEKYGRDL…RRFQQVYVDQ (182 aa)) is NBD1. 207–214 (GEPGVGKT) is a binding site for ATP. The segment at 342-550 (PSVEDTISIL…IAEIISKWTG (209 aa)) is linker. A coiled-coil region spans residues 392–526 (IDLVDEAAAK…AEAKLREIQV (135 aa)). Residues 560–771 (EAQKLLHLEE…RVDEFIIFHS (212 aa)) form an NBD2 region. An ATP-binding site is contributed by 610–617 (GPTGVGKT). The C-terminal stretch occupies residues 772 to 871 (LRKDQLRQIV…FRRQVELATV (100 aa)).

Belongs to the ClpA/ClpB family. In terms of assembly, homohexamer. The oligomerization is ATP-dependent.

Its subcellular location is the cytoplasm. In terms of biological role, part of a stress-induced multi-chaperone system, it is involved in the recovery of the cell from heat-induced damage, in cooperation with DnaK, DnaJ and GrpE. Acts before DnaK, in the processing of protein aggregates. Protein binding stimulates the ATPase activity; ATP hydrolysis unfolds the denatured protein aggregates, which probably helps expose new hydrophobic binding sites on the surface of ClpB-bound aggregates, contributing to the solubilization and refolding of denatured protein aggregates by DnaK. This chain is Chaperone protein ClpB 1 (clpB1), found in Thermosynechococcus vestitus (strain NIES-2133 / IAM M-273 / BP-1).